The primary structure comprises 798 residues: Penicillin-binding protein 1A (798 aa).

Residues 1–9 lie on the Cytoplasmic side of the membrane; that stretch reads MIKKILTTC. The helical; Signal-anchor for type II membrane protein transmembrane segment at 10–30 threads the bilayer; the sequence is FGLVFGFCVFGVGLVAIAILV. The Periplasmic portion of the chain corresponds to 31 to 798; sequence TYPKLPSLDS…SKQQQLDSLF (768 aa). The tract at residues 50-218 is transglycosylase; that stretch reads LTIYSADGEV…SAYNPIVNPE (169 aa). Catalysis depends on E88, which acts as the Proton donor; for transglycosylase activity. The tract at residues 378 to 700 is transpeptidase; the sequence is RRALGFAARA…GTIAVPVWVD (323 aa). S461 (acyl-ester intermediate; for transpeptidase activity) is an active-site residue. Residues 738–798 form a disordered region; sequence GLTLDNSGIA…SKQQQLDSLF (61 aa). The span at 768 to 777 shows a compositional bias: basic and acidic residues; that stretch reads AADDEVRQDM. Residues 783-798 are compositionally biased toward polar residues; sequence LPSNTGSKQQQLDSLF.

This sequence in the N-terminal section; belongs to the glycosyltransferase 51 family. It in the C-terminal section; belongs to the transpeptidase family.

Its subcellular location is the cell inner membrane. The enzyme catalyses [GlcNAc-(1-&gt;4)-Mur2Ac(oyl-L-Ala-gamma-D-Glu-L-Lys-D-Ala-D-Ala)](n)-di-trans,octa-cis-undecaprenyl diphosphate + beta-D-GlcNAc-(1-&gt;4)-Mur2Ac(oyl-L-Ala-gamma-D-Glu-L-Lys-D-Ala-D-Ala)-di-trans,octa-cis-undecaprenyl diphosphate = [GlcNAc-(1-&gt;4)-Mur2Ac(oyl-L-Ala-gamma-D-Glu-L-Lys-D-Ala-D-Ala)](n+1)-di-trans,octa-cis-undecaprenyl diphosphate + di-trans,octa-cis-undecaprenyl diphosphate + H(+). It carries out the reaction Preferential cleavage: (Ac)2-L-Lys-D-Ala-|-D-Ala. Also transpeptidation of peptidyl-alanyl moieties that are N-acyl substituents of D-alanine.. It participates in cell wall biogenesis; peptidoglycan biosynthesis. Its function is as follows. Cell wall formation. Synthesis of cross-linked peptidoglycan from the lipid intermediates. The enzyme has a penicillin-insensitive transglycosylase N-terminal domain (formation of linear glycan strands) and a penicillin-sensitive transpeptidase C-terminal domain (cross-linking of the peptide subunits). The protein is Penicillin-binding protein 1A (mrcA) of Neisseria meningitidis serogroup A / serotype 4A (strain DSM 15465 / Z2491).